A 324-amino-acid chain; its full sequence is Phospho-N-acetylmuramoyl-pentapeptide-transferase (324 aa).

Transmembrane regions (helical) follow at residues T9–V29, T53–I73, V77–L97, F117–A137, I147–S167, L176–F196, M201–N221, I227–L247, L253–F273, and V304–F324.

This sequence belongs to the glycosyltransferase 4 family. MraY subfamily. The cofactor is Mg(2+).

The protein resides in the cell membrane. The enzyme catalyses UDP-N-acetyl-alpha-D-muramoyl-L-alanyl-gamma-D-glutamyl-meso-2,6-diaminopimeloyl-D-alanyl-D-alanine + di-trans,octa-cis-undecaprenyl phosphate = di-trans,octa-cis-undecaprenyl diphospho-N-acetyl-alpha-D-muramoyl-L-alanyl-D-glutamyl-meso-2,6-diaminopimeloyl-D-alanyl-D-alanine + UMP. It functions in the pathway cell wall biogenesis; peptidoglycan biosynthesis. In terms of biological role, catalyzes the initial step of the lipid cycle reactions in the biosynthesis of the cell wall peptidoglycan: transfers peptidoglycan precursor phospho-MurNAc-pentapeptide from UDP-MurNAc-pentapeptide onto the lipid carrier undecaprenyl phosphate, yielding undecaprenyl-pyrophosphoryl-MurNAc-pentapeptide, known as lipid I. The sequence is that of Phospho-N-acetylmuramoyl-pentapeptide-transferase from Listeria monocytogenes serotype 4b (strain CLIP80459).